We begin with the raw amino-acid sequence, 284 residues long: T-cell leukemia homeobox protein 2 (284 aa).

3 disordered regions span residues 1–50 (MEPG…NGAF), 78–106 (GGVI…GPSG), and 139–166 (FSGT…SFSR). The segment covering 30 to 50 (TPGGGLGLGRGGQGHGENGAF) has biased composition (gly residues). The span at 87–96 (RPLPVPPPAG) shows a compositional bias: pro residues. The homeobox DNA-binding region spans 157–216 (RKKPRTSFSRSQVLELERRFLRQKYLASAERAALAKALRMTDAQVKTWFQNRRTKWRRQT).

It localises to the nucleus. Transcription activator that binds DNA elements with the consensus sequence 5'-CGGTAATTGG-3'. Binds DNA via its homeobox. Required for normal cell death of enteric neurons in the gastrointestinal tract. Required for normal development of the enteric nervous system, and for proper development of normal motility of the gastrointestinal tract. The protein is T-cell leukemia homeobox protein 2 (TLX2) of Homo sapiens (Human).